Here is a 550-residue protein sequence, read N- to C-terminus: MSDEKKKKRGFFRYSVLTTSSFSSWRRSSTSGSISQSSRTTSKTTTSSSVTSSNPINAPPPTATSSSSVLPSTSSEPPPPASAPPRISIYHKMVPSKSKFRQCDVCEHIFIFDFVRKQHLDDVYACNVCGIRVHKGCLDRVKNDCKITTQYMGGILENAVIQSNKKQWEKPTTASISKSLTTSPTCSTSTTMSPAGVEKNVHKTRKLISMTTSTLDDVTTFNSEINEEMDEETVLMTWEDVTIKLTDVDVMTKIGDGRFGSVYFGGYHGNAAVRFVNMNYLSQEDRRADVFATEIVSAYKNSRHDHIALFYGYVSDPVTNTYAIVTNFYQHNTLYHRIHEQLSEDFDQSWTFQISLQICQAMSYLHKKKILHRDLRTKNILLDNPNRVVVTDFALMKLERLENPRRNCTLLIPNHWIDYLSPEIAGNLMIDWRGDVLFQHELPFSQESDVYSFGTIFFELLLRRMPTGCDSWDQKLYAKMCGQKAALQRLDAQLQKIDGKLHELLLECWSSQPEKRPSFQQIVKRITVQMPRKESNKQKRRSTAHENPLF.

2 stretches are compositionally biased toward low complexity: residues 21-56 (SFSSWRRSSTSGSISQSSRTTSKTTTSSSVTSSNPI) and 63-75 (ATSSSSVLPSTSS). The disordered stretch occupies residues 21–87 (SFSSWRRSST…PPPASAPPRI (67 aa)). The Phorbol-ester/DAG-type zinc-finger motif lies at 90–145 (YHKMVPSKSKFRQCDVCEHIFIFDFVRKQHLDDVYACNVCGIRVHKGCLDRVKNDC). A disordered region spans residues 172-196 (TTASISKSLTTSPTCSTSTTMSPAG). Positions 177–193 (SKSLTTSPTCSTSTTMS) are enriched in low complexity. Residues 248–528 (VDVMTKIGDG…FQQIVKRITV (281 aa)) form the Protein kinase domain. Residues 530–550 (MPRKESNKQKRRSTAHENPLF) are disordered.

It belongs to the protein kinase superfamily. TKL Ser/Thr protein kinase family. Interacts with ndk-1.

Its function is as follows. Probable inactive protein kinase which positively regulates Ras-mediated signaling probably acting at the level of let-60/ras or/and lin-45/raf. In the germline, regulates meiotic progression during oogenesis and mpk-1 (isoform b) phosphorylation. Plays a role in meiotic recombination events. Functions redundantly with ksr-1 in the Ras-mediated regulation of larval survival, the development of excretory canal, in determining vulval precursor cell fate during vulval induction and in mpk-1 phosphorylation in somatic cells. This is Kinase suppressor of Ras B from Caenorhabditis elegans.